A 141-amino-acid polypeptide reads, in one-letter code: Galactose-6-phosphate isomerase subunit LacA (141 aa).

It belongs to the LacAB/RpiB family. In terms of assembly, heteromultimeric protein consisting of LacA and LacB.

The catalysed reaction is aldehydo-D-galactose 6-phosphate = keto-D-tagatose 6-phosphate. The protein operates within carbohydrate metabolism; D-galactose 6-phosphate degradation; D-tagatose 6-phosphate from D-galactose 6-phosphate: step 1/1. This is Galactose-6-phosphate isomerase subunit LacA from Streptococcus pneumoniae (strain ATCC 700669 / Spain 23F-1).